The sequence spans 482 residues: 2-succinylbenzoate--CoA ligase (482 aa).

The protein belongs to the ATP-dependent AMP-binding enzyme family. MenE subfamily.

It carries out the reaction 2-succinylbenzoate + ATP + CoA = 2-succinylbenzoyl-CoA + AMP + diphosphate. Its pathway is quinol/quinone metabolism; 1,4-dihydroxy-2-naphthoate biosynthesis; 1,4-dihydroxy-2-naphthoate from chorismate: step 5/7. The protein operates within quinol/quinone metabolism; menaquinone biosynthesis. Functionally, converts 2-succinylbenzoate (OSB) to 2-succinylbenzoyl-CoA (OSB-CoA). This is 2-succinylbenzoate--CoA ligase from Bacillus cereus (strain ATCC 14579 / DSM 31 / CCUG 7414 / JCM 2152 / NBRC 15305 / NCIMB 9373 / NCTC 2599 / NRRL B-3711).